Here is a 591-residue protein sequence, read N- to C-terminus: ATPase family AAA domain-containing protein 3A (591 aa).

The tract at residues M1–T52 is disordered. The residue at position 2 (S2) is an N-acetylserine. Positions S2–F49 are required for interaction with the inner surface of the mitochondrial outer membrane. Topologically, residues S2 to K245 are mitochondrial intermembrane. Basic and acidic residues predominate over residues G31 to S47. Residues E55–E216 are a coiled coil. Residues V246 to A263 form a helical membrane-spanning segment. Over K264–C591 the chain is Mitochondrial matrix. The S100B-binding stretch occupies residues R289–R304. G351–T358 lines the ATP pocket. N6-acetyllysine; alternate is present on K490. K490 carries the N6-succinyllysine; alternate modification. An N6-acetyllysine mark is found at K494 and K512.

This sequence belongs to the AAA ATPase family. As to quaternary structure, can form homooligomers. Homodimer formation at the N-terminus may be regulated by ATP and is required for the interaction with the inner surface of the mitochondrial outer membrane and correct mitochondrial homeostasis. Interacts with components of the mitochondrial ribosome and with other proteins involved in mitochondrial RNA metabolism. May also interact with protein involved in lipid metabolism, including STARD9. May interact with FAM210A. Interacts with GADD45GIP1. Interacts with S100B in a Ca(+2)- and Zn(+2)-dependent manner; this interaction probably occurs in the cytosol prior to mitochondrial targeting. S100B could assist ATAD3A cytoplasmic processing, preventing aggregation and favoring mitochondrial localization. Interacts with HSP60/HSPD1. Interacts with CLPB. Interacts with EIF2AK3/PERK; ATAD3A and EIF2S1/eIF-2-alpha occupy a common binding site within the cytoplasmic loop of EIF2AK3/PERK, leading to prevent EIF2AK3/PERK association with its substrate EIF2S1/eIF-2-alpha.

The protein resides in the mitochondrion inner membrane. It localises to the mitochondrion matrix. It is found in the mitochondrion nucleoid. The catalysed reaction is ATP + H2O = ADP + phosphate + H(+). Functionally, essential for mitochondrial network organization, mitochondrial metabolism and cell growth at organism and cellular level. May play an important role in mitochondrial protein synthesis. May also participate in mitochondrial DNA replication. May bind to mitochondrial DNA D-loops and contribute to nucleoid stability. Required for enhanced channeling of cholesterol for hormone-dependent steroidogenesis. Involved in mitochondrial-mediated antiviral innate immunity. Required to protect mitochondria from the PERK-mediated unfolded protein response: specifically inhibits the activity of EIF2AK3/PERK at mitochondria-endoplasmic reticulum contact sites, thereby providing a safe haven for mitochondrial protein translation during endoplasmic reticulum stress. Ability to inhibit EIF2AK3/PERK is independent of its ATPase activity. Also involved in the mitochondrial DNA damage response by promoting signaling between damaged genomes and the mitochondrial membrane, leading to activation of the integrated stress response (ISR). This is ATPase family AAA domain-containing protein 3A (Atad3a) from Rattus norvegicus (Rat).